We begin with the raw amino-acid sequence, 477 residues long: Calcium uptake protein 1, mitochondrial (477 aa).

The transit peptide at 1–33 (MFRLNTLSALAELAVGSRWYHGASQPTQTKRRL) directs the protein to the mitochondrion. The tract at residues 57–107 (AESPPCVNSKKPDTEDKERNKDSGEVSSREGRAADAAAEPYPEDKKKKRSG) is disordered. The span at 66–89 (KKPDTEDKERNKDSGEVSSREGRA) shows a compositional bias: basic and acidic residues. Positions 101-112 (KKKKRSGFRDRK) are polybasic region. Serine 124 is modified (phosphoserine; by PKB). A k/R-ring region spans residues 128 to 131 (KIFR). In terms of domain architecture, EF-hand 1 spans 220-255 (TPQRNFEIAFKMFDLNGDGEVDMEEFEQVQSIIRSQ). Ca(2+)-binding residues include aspartate 233, asparagine 235, aspartate 237, glutamate 239, and glutamate 244. The k/R-ring stretch occupies residues 261 to 265 (RHRDR). One can recognise an EF-hand 2; degenerate domain in the interval 356 to 376 (KDGKGLTFQEVENFFTFLKNI). Positions 410–445 (LSDHVCDVVFALFDCDGNGELSNKEFVSIMKQRLMR) constitute an EF-hand 3 domain. The Ca(2+) site is built by aspartate 423, aspartate 425, asparagine 427, glutamate 429, and glutamate 434. An Asymmetric dimethylarginine modification is found at arginine 457. Residues 457–467 (RLMQAMWKCAQ) are C-helix region.

Belongs to the MICU1 family. MICU1 subfamily. As to quaternary structure, heterodimer; disulfide-linked; heterodimerizes with MICU2 or MICU3. Homodimer; disulfide-linked. Component of the uniplex complex, composed of MCU, EMRE/SMDT1, MICU1 and MICU2 (or MICU3) in a 4:4:1:1 stoichiometry. The composition of calcium sensors within the uniplex complex can differ depending on tissues: a MICU1 homodimer can be present instead of the MICU1-MICU2 heterodimer in skeletal-muscle and kidney. MICU1 is recruited to the uniplex complex by EMRE/SMDT1, and it associates with MCU at low calcium levels, occluding the pore of the MCU channel. Associates with the MICOS complex. Interacts with SLC25A23. Interacts with CHCHD4/MIA40; which introduces the interchain disulfide bond with MICU2. Interacts (when methylated) with UCP2; leading to decrease the calcium sensitivity of MICU1. In terms of assembly, heterodimer; disulfide-linked; heterodimerizes with MICU2 or MICU3. Heterodimerizes with MICU3 in skeletal muscle. Component of the uniplex complex, composed of MCU, EMRE/SMDT1, MICU1 and MICU2 (or MICU3) in a 4:4:1:1 stoichiometry. Also localizes to mitochondrial cristae junctions. In terms of processing, phosphorylation at Ser-124 by AKT1 impairs its maturation and stability. Post-translationally, asymmetric dimethylation at Arg-457 by PRMT1 decreases the calcium sensitivity of MICU1 by promoting interaction with UCP2. Degraded by YME1L1 when not complexed as homodimer or heterodimer. Not degraded when complexed as homodimer or heterodimer; the presence of the interchain disulfide bond protecting MICU1 from degradation by YME1L1. Expressed in skeletal muscle, heart, kidney, liver, brain, lung, fat and spleen. As to expression, specifically expressed in the skeletal muscle.

It localises to the mitochondrion intermembrane space. It is found in the mitochondrion inner membrane. Functionally, calcium sensor of the mitochondrial calcium uniporter (MCU) channel, which senses calcium level via its EF-hand domains. MICU1 and MICU2 (or MICU3) form a disulfide-linked heterodimer that stimulates and inhibits MCU activity, depending on the concentration of calcium. At low calcium levels, MICU1 occludes the pore of the MCU channel, preventing mitochondrial calcium uptake. At higher calcium levels, calcium-binding to MICU1 and MICU2 (or MICU3) induces a conformational change that weakens MCU-MICU1 interactions and moves the MICU1-MICU2 heterodimer away from the pore, allowing calcium permeation through the MCU channel. Also required to protect against manganese toxicity by preventing manganese uptake by MCU: mechanistically, manganese-binding to its EF-hand domains does not induce any conformational change, maintaining MCU pore occlusion. Acts as a regulator of mitochondrial cristae structure independently of its ability to regulate the mitochondrial calcium uniporter channel. Regulates glucose-dependent insulin secretion in pancreatic beta-cells by regulating mitochondrial calcium uptake. Induces T-helper 1-mediated autoreactivity, which is accompanied by the release of IFNG. Its function is as follows. Isoform that regulates mitochondrial calcium uniporter (MCU) in the skeletal muscle. Compared to other isoforms, this isoform has higher affinity for calcium, promoting mitochondrial calcium uptake at lower calcium concentrations. This allows a rapid response of mitochondrial metabolism and ensures sustained ATP production needed for resistance and strenuous exercise. This chain is Calcium uptake protein 1, mitochondrial, found in Mus musculus (Mouse).